The following is a 257-amino-acid chain: tRNA pseudouridine synthase A (257 aa).

The active-site Nucleophile is the aspartate 53. Residue tyrosine 111 participates in substrate binding.

This sequence belongs to the tRNA pseudouridine synthase TruA family. As to quaternary structure, homodimer.

The enzyme catalyses uridine(38/39/40) in tRNA = pseudouridine(38/39/40) in tRNA. In terms of biological role, formation of pseudouridine at positions 38, 39 and 40 in the anticodon stem and loop of transfer RNAs. This chain is tRNA pseudouridine synthase A, found in Xanthomonas oryzae pv. oryzae (strain MAFF 311018).